Reading from the N-terminus, the 609-residue chain is Glutamine--fructose-6-phosphate aminotransferase [isomerizing] (609 aa).

Cys-2 functions as the Nucleophile; for GATase activity in the catalytic mechanism. Residues 2 to 217 form the Glutamine amidotransferase type-2 domain; the sequence is CGIVGYIGRR…EGWLAELTPE (216 aa). SIS domains lie at 286-425 and 458-599; these read SAAE…QNGR and AAEA…VDKP. Lys-604 (for Fru-6P isomerization activity) is an active-site residue.

As to quaternary structure, homodimer.

The protein localises to the cytoplasm. It catalyses the reaction D-fructose 6-phosphate + L-glutamine = D-glucosamine 6-phosphate + L-glutamate. In terms of biological role, catalyzes the first step in hexosamine metabolism, converting fructose-6P into glucosamine-6P using glutamine as a nitrogen source. The protein is Glutamine--fructose-6-phosphate aminotransferase [isomerizing] of Symbiobacterium thermophilum (strain DSM 24528 / JCM 14929 / IAM 14863 / T).